The following is a 383-amino-acid chain: ATP phosphoribosyltransferase regulatory subunit (383 aa).

Belongs to the class-II aminoacyl-tRNA synthetase family. HisZ subfamily. In terms of assembly, heteromultimer composed of HisG and HisZ subunits.

It localises to the cytoplasm. The protein operates within amino-acid biosynthesis; L-histidine biosynthesis; L-histidine from 5-phospho-alpha-D-ribose 1-diphosphate: step 1/9. Functionally, required for the first step of histidine biosynthesis. May allow the feedback regulation of ATP phosphoribosyltransferase activity by histidine. The chain is ATP phosphoribosyltransferase regulatory subunit from Cupriavidus necator (strain ATCC 17699 / DSM 428 / KCTC 22496 / NCIMB 10442 / H16 / Stanier 337) (Ralstonia eutropha).